The following is a 175-amino-acid chain: Nucleoside diphosphate kinase 6 (175 aa).

K8, F57, R85, T91, R105, and N115 together coordinate ATP. Catalysis depends on H118, which acts as the Pros-phosphohistidine intermediate.

It belongs to the NDK family. It depends on Mg(2+) as a cofactor.

It catalyses the reaction a 2'-deoxyribonucleoside 5'-diphosphate + ATP = a 2'-deoxyribonucleoside 5'-triphosphate + ADP. The enzyme catalyses a ribonucleoside 5'-diphosphate + ATP = a ribonucleoside 5'-triphosphate + ADP. Major role in the synthesis of nucleoside triphosphates other than ATP. The ATP gamma phosphate is transferred to the NDP beta phosphate via a ping-pong mechanism, using a phosphorylated active-site intermediate. This chain is Nucleoside diphosphate kinase 6 (Nme6), found in Rattus norvegicus (Rat).